A 242-amino-acid chain; its full sequence is Biosynthetic peptidoglycan transglycosylase (242 aa).

A helical membrane pass occupies residues 19–39 (ILAALAVFWGGGIALFSVVPV).

It belongs to the glycosyltransferase 51 family.

Its subcellular location is the cell inner membrane. It catalyses the reaction [GlcNAc-(1-&gt;4)-Mur2Ac(oyl-L-Ala-gamma-D-Glu-L-Lys-D-Ala-D-Ala)](n)-di-trans,octa-cis-undecaprenyl diphosphate + beta-D-GlcNAc-(1-&gt;4)-Mur2Ac(oyl-L-Ala-gamma-D-Glu-L-Lys-D-Ala-D-Ala)-di-trans,octa-cis-undecaprenyl diphosphate = [GlcNAc-(1-&gt;4)-Mur2Ac(oyl-L-Ala-gamma-D-Glu-L-Lys-D-Ala-D-Ala)](n+1)-di-trans,octa-cis-undecaprenyl diphosphate + di-trans,octa-cis-undecaprenyl diphosphate + H(+). It functions in the pathway cell wall biogenesis; peptidoglycan biosynthesis. Its function is as follows. Peptidoglycan polymerase that catalyzes glycan chain elongation from lipid-linked precursors. In Salmonella newport (strain SL254), this protein is Biosynthetic peptidoglycan transglycosylase.